Consider the following 129-residue polypeptide: Succinate dehydrogenase assembly factor 3, mitochondrial (129 aa).

The protein belongs to the complex I LYR family. SDHAF3 subfamily. As to quaternary structure, interacts with the iron-sulfur protein subunit within the SDH catalytic dimer.

It is found in the mitochondrion matrix. Its function is as follows. Plays an essential role in the assembly of succinate dehydrogenase (SDH), an enzyme complex (also referred to as respiratory complex II) that is a component of both the tricarboxylic acid (TCA) cycle and the mitochondrial electron transport chain, and which couples the oxidation of succinate to fumarate with the reduction of ubiquinone (coenzyme Q) to ubiquinol. Promotes maturation of the iron-sulfur protein subunit of the SDH catalytic dimer, protecting it from the deleterious effects of oxidants. May act together with SDHAF1. This chain is Succinate dehydrogenase assembly factor 3, mitochondrial, found in Aspergillus fumigatus (strain ATCC MYA-4609 / CBS 101355 / FGSC A1100 / Af293) (Neosartorya fumigata).